The following is a 502-amino-acid chain: ATP synthase subunit alpha, chloroplastic (502 aa).

Residue 170-177 (GDRQTGKS) participates in ATP binding.

The protein belongs to the ATPase alpha/beta chains family. As to quaternary structure, F-type ATPases have 2 components, CF(1) - the catalytic core - and CF(0) - the membrane proton channel. CF(1) has five subunits: alpha(3), beta(3), gamma(1), delta(1), epsilon(1). CF(0) has four main subunits: a, b, b' and c.

Its subcellular location is the plastid. The protein resides in the chloroplast thylakoid membrane. The catalysed reaction is ATP + H2O + 4 H(+)(in) = ADP + phosphate + 5 H(+)(out). Functionally, produces ATP from ADP in the presence of a proton gradient across the membrane. The alpha chain is a regulatory subunit. This Guillardia theta (Cryptophyte) protein is ATP synthase subunit alpha, chloroplastic.